A 238-amino-acid polypeptide reads, in one-letter code: 1-(5-phosphoribosyl)-5-[(5-phosphoribosylamino)methylideneamino] imidazole-4-carboxamide isomerase (238 aa).

The active-site Proton acceptor is D8. D129 (proton donor) is an active-site residue.

It belongs to the HisA/HisF family.

It is found in the cytoplasm. The catalysed reaction is 1-(5-phospho-beta-D-ribosyl)-5-[(5-phospho-beta-D-ribosylamino)methylideneamino]imidazole-4-carboxamide = 5-[(5-phospho-1-deoxy-D-ribulos-1-ylimino)methylamino]-1-(5-phospho-beta-D-ribosyl)imidazole-4-carboxamide. It participates in amino-acid biosynthesis; L-histidine biosynthesis; L-histidine from 5-phospho-alpha-D-ribose 1-diphosphate: step 4/9. In Anaeromyxobacter dehalogenans (strain 2CP-C), this protein is 1-(5-phosphoribosyl)-5-[(5-phosphoribosylamino)methylideneamino] imidazole-4-carboxamide isomerase.